Here is a 293-residue protein sequence, read N- to C-terminus: Vibriobactin-specific isochorismatase (293 aa).

Positions 211–287 (KLTGLSLRTM…QWWQTIQANL (77 aa)) constitute a Carrier domain. Serine 248 is subject to O-(pantetheine 4'-phosphoryl)serine.

It belongs to the isochorismatase family. The cofactor is pantetheine 4'-phosphate.

The catalysed reaction is isochorismate + H2O = (2S,3S)-2,3-dihydroxy-2,3-dihydrobenzoate + pyruvate. Its pathway is siderophore biosynthesis; vibriobactin biosynthesis. Involved in the biosynthesis of the catechol siderophore vibriobactin. Vibriobactin is a chelating compound involved in transporting iron from the bacterial environment into the cell cytoplasm. In Vibrio cholerae serotype O1 (strain ATCC 39541 / Classical Ogawa 395 / O395), this protein is Vibriobactin-specific isochorismatase (vibB).